A 530-amino-acid polypeptide reads, in one-letter code: Serendipity locus protein alpha (530 aa).

Transient expression in blastoderm from nuclear cycle 11 to the onset of gastrulation.

The protein localises to the cytoplasm. The protein resides in the cell membrane. Required for the cellularization of the syncytial blastoderm embryo. Involved in the localization of the actin filaments just prior to and during plasma membrane invagination. Sry-alpha together with nullo and bnk may provide auxiliary functions, by acting both to stabilize a large and dynamic microfilament structure and regulate its functions. The sequence is that of Serendipity locus protein alpha (Sry-alpha) from Drosophila melanogaster (Fruit fly).